A 704-amino-acid polypeptide reads, in one-letter code: Acetyl-coenzyme A synthetase 1 (704 aa).

Residues 239–242 (RGGK) and Thr358 each bind CoA. Residues 434–436 (GEP), 458–463 (DTYWQT), Asp550, and Arg565 each bind ATP. CoA is bound at residue Ser573. Arg576 is a binding site for ATP. Arg641 contacts CoA. Residues 702 to 704 (VKL) carry the Microbody targeting signal motif.

This sequence belongs to the ATP-dependent AMP-binding enzyme family.

It is found in the microsome. The protein resides in the endoplasmic reticulum. It carries out the reaction acetate + ATP + CoA = acetyl-CoA + AMP + diphosphate. In Candida glabrata (strain ATCC 2001 / BCRC 20586 / JCM 3761 / NBRC 0622 / NRRL Y-65 / CBS 138) (Yeast), this protein is Acetyl-coenzyme A synthetase 1 (ACS1).